Reading from the N-terminus, the 164-residue chain is Phosphopantetheine adenylyltransferase (164 aa).

Substrate is bound at residue Ser10. ATP-binding positions include Ser10–Phe11 and His18. Residues Lys42, Thr79, and Arg93 each contribute to the substrate site. Residues Gly94–Arg96, Glu104, and Val129–Thr135 each bind ATP.

This sequence belongs to the bacterial CoaD family. In terms of assembly, homohexamer. Mg(2+) serves as cofactor.

The protein resides in the cytoplasm. It carries out the reaction (R)-4'-phosphopantetheine + ATP + H(+) = 3'-dephospho-CoA + diphosphate. Its pathway is cofactor biosynthesis; coenzyme A biosynthesis; CoA from (R)-pantothenate: step 4/5. In terms of biological role, reversibly transfers an adenylyl group from ATP to 4'-phosphopantetheine, yielding dephospho-CoA (dPCoA) and pyrophosphate. This is Phosphopantetheine adenylyltransferase from Bradyrhizobium sp. (strain BTAi1 / ATCC BAA-1182).